A 918-amino-acid chain; its full sequence is Whirlin (918 aa).

The PDZ 1 domain maps to 141-224 (LVSLRRAKAH…LVLSVYSAGR (84 aa)). The interval 240 to 266 (PQGRSTSPPSSLPQPHGSTLRQREDDR) is disordered. The region spanning 280 to 362 (KVNLVLGDGR…LILTVKDVGR (83 aa)) is the PDZ 2 domain. 3 disordered regions span residues 387–407 (NSAG…GFYK), 503–538 (SMKA…TSTT), and 560–824 (EGTG…LEPT). Residues 522-538 (SYSDTGSSTGSHGTSTT) are compositionally biased toward low complexity. The span at 563 to 572 (GETTQGSTNA) shows a compositional bias: polar residues. 2 stretches are compositionally biased toward pro residues: residues 591 to 600 (IKPPPPPPPL) and 638 to 649 (RSPPPGTAPTPG). Positions 654–672 (QDSPSSPIYASISHANPSS) are enriched in polar residues. Position 696 is a phosphoserine (S696). Polar residues-rich tracts occupy residues 754-773 (QTRT…TLSE) and 783-798 (EAST…SAKN). Residues 800-811 (NGKEQPRTERTA) are compositionally biased toward basic and acidic residues. Residues 827–910 (LVRVRKSAAT…TKERDYIDFL (84 aa)) enclose the PDZ 3 domain.

As to quaternary structure, forms homooligomers. Interacts (via C-terminal PDZ domain) with MYO15A; this interaction is necessary for localization of WHRN to stereocilia tips. Interacts (via C-terminal PDZ domain) with MPP1/p55. Interacts with LRRC4C/NGL1. Interacts with MYO7A. Interacts with RPGR. Interacts with EPS8. Interacts with CASK. Interacts with CIB2. Component of USH2 complex, composed of ADGRV1, PDZD7, USH2A and WHRN. Interacts (via PDZ domains) with PDZD7; the interaction is direct. Interacts (via N-terminal PDZ domain) with USH2A (via cytoplasmic region). Interacts with ADGRV1/MASS1 (via cytoplasmic region). In terms of tissue distribution, expressed in the retina. Colocalizes with RPGR in the photoreceptor connecting cilium, a thin bridge linking the cell body and the light-sensing outer segment (at protein level). Detected in the inner ear throughout development from embryonic day 12 to 20 days after birth. Displays a dynamic pattern of expression after birth, demonstrating an ordered appearance and fade-out across stereocilia rows. Isoforms 5, 6, 7 and 8 are not detected in the retina.

Its subcellular location is the cytoplasm. The protein resides in the cell projection. It is found in the stereocilium. The protein localises to the growth cone. It localises to the photoreceptor inner segment. Its subcellular location is the synapse. Involved in hearing and vision as member of the USH2 complex. Necessary for elongation and maintenance of inner and outer hair cell stereocilia in the organ of Corti in the inner ear. Involved in the maintenance of the hair bundle ankle region, which connects stereocilia in cochlear hair cells of the inner ear. In retina photoreceptors, required for the maintenance of periciliary membrane complex that seems to play a role in regulating intracellular protein transport. The chain is Whirlin from Mus musculus (Mouse).